A 186-amino-acid chain; its full sequence is MAAQKSALILLPPEDAEEIEVIVTGDVLVRGGLQVLYAGSSTEPVKCAKGARIVPDVALKDVKNKTFDIIIIPGGPGCSKLAECPVIGELLKTQVKSGGLIGAICAGPTVLLAHGIVAERVTCHYTVKDKMTEGGYKYLDDNVVISDRVITSKGPGTAFEFALKIVETLEGPEKTNSLLKPLCLAK.

Residues E20, C105, and H124 contribute to the active site.

It belongs to the peptidase C56 family. DJ-1 subfamily. As to expression, expressed in various tissues, including pharyngeal muscles, pharynx-intestinal valve, ventral nerve cord, spermatheca, rectal gland, inner labial (IL) cells of head neurons, phasmid (PHA/PHB) neurons in tail and supporting sheath/socket cells, as well as in head mesodermal cells (HMC), excretory canals and coelomocytes.

The protein localises to the cytoplasm. The enzyme catalyses methylglyoxal + H2O = (R)-lactate + H(+). In terms of biological role, catalyzes the conversion of methylglyoxal (MG) or glyoxal (GO) to D-lactate or glycolic acid respectively in a single glutathione (GSH)-independent step. May play a role in detoxifying endogenously produced glyoxals. Involved in protection against glyoxal-induced cell death. Protects dopaminergic neurons from glyoxal-dependent neuronal degeneration. This chain is Glutathione-independent glyoxalase DJR-1.2, found in Caenorhabditis elegans.